A 133-amino-acid chain; its full sequence is Fatty acid-binding protein homolog 2 (133 aa).

Residues arginine 107 and 127 to 129 (RTY) each bind a fatty acid.

The protein belongs to the calycin superfamily. Fatty-acid binding protein (FABP) family.

May play a role in the acquisition, storage, and transport of lipids, and may be important to the organism since it is incapable of synthesizing most of its lipids de novo. The sequence is that of Fatty acid-binding protein homolog 2 (FABP2) from Echinococcus granulosus (Hydatid tapeworm).